Reading from the N-terminus, the 152-residue chain is Transcriptional regulator MraZ (152 aa).

2 SpoVT-AbrB domains span residues 5–52 (ASAI…PLHE) and 81–124 (AQDC…EESA).

Belongs to the MraZ family. Forms oligomers.

It is found in the cytoplasm. Its subcellular location is the nucleoid. The chain is Transcriptional regulator MraZ from Shewanella frigidimarina (strain NCIMB 400).